We begin with the raw amino-acid sequence, 587 residues long: tRNA (guanine(37)-N(1))-methyltransferase 2 (587 aa).

S-adenosyl-L-methionine contacts are provided by residues R360 and D430 to A431. The tract at residues A446–M469 is disordered. A compositionally biased stretch (basic and acidic residues) spans S450–N461. An S-adenosyl-L-methionine-binding site is contributed by N478.

It belongs to the class I-like SAM-binding methyltransferase superfamily. TRM5/TYW2 family. In terms of assembly, monomer.

The protein resides in the mitochondrion matrix. Its subcellular location is the nucleus. The protein localises to the cytoplasm. The catalysed reaction is guanosine(37) in tRNA + S-adenosyl-L-methionine = N(1)-methylguanosine(37) in tRNA + S-adenosyl-L-homocysteine + H(+). Functionally, specifically methylates the N1 position of guanosine-37 in various cytoplasmic and mitochondrial tRNAs. Methylation is not dependent on the nature of the nucleoside 5' of the target nucleoside. This is the first step in the biosynthesis of wybutosine (yW), a modified base adjacent to the anticodon of tRNAs and required for accurate decoding. This chain is tRNA (guanine(37)-N(1))-methyltransferase 2, found in Phaeodactylum tricornutum (strain CCAP 1055/1).